A 92-amino-acid polypeptide reads, in one-letter code: Turripeptide UID-02 (92 aa).

Residues 1 to 21 form the signal peptide; the sequence is MGFYMLLTVALLLTSLMNVEA. A propeptide spanning residues 22 to 39 is cleaved from the precursor; it reads TPVDQAERSALEKSGLGN.

In terms of tissue distribution, expressed by the venom duct.

The protein localises to the secreted. This chain is Turripeptide UID-02, found in Gemmula speciosa (Splendid gem-turris).